We begin with the raw amino-acid sequence, 765 residues long: Probable dipeptidyl peptidase 4 (765 aa).

The signal sequence occupies residues 1–14 (MKWSILLLVGCAAA). Residues Asn35, Asn78, Asn101, Asn110, Asn169, Asn218, Asn465, and Asn490 are each glycosylated (N-linked (GlcNAc...) asparagine). Ser613 functions as the Charge relay system in the catalytic mechanism. N-linked (GlcNAc...) asparagine glycosylation occurs at Asn665. Catalysis depends on charge relay system residues Asp690 and His725.

It belongs to the peptidase S9B family.

It localises to the secreted. It catalyses the reaction Release of an N-terminal dipeptide, Xaa-Yaa-|-Zaa-, from a polypeptide, preferentially when Yaa is Pro, provided Zaa is neither Pro nor hydroxyproline.. Its function is as follows. Extracellular dipeptidyl-peptidase which removes N-terminal dipeptides sequentially from polypeptides having unsubstituted N-termini provided that the penultimate residue is proline. Contributes to pathogenicity. The polypeptide is Probable dipeptidyl peptidase 4 (dpp4) (Aspergillus fumigatus (strain CBS 144.89 / FGSC A1163 / CEA10) (Neosartorya fumigata)).